The primary structure comprises 425 residues: Histidinol dehydrogenase (425 aa).

Residues Ser-231, Gln-253, and His-256 each contribute to the substrate site. 2 residues coordinate Zn(2+): Gln-253 and His-256. Active-site proton acceptor residues include Glu-321 and His-322. 4 residues coordinate substrate: His-322, Asp-355, Glu-409, and His-414. A Zn(2+)-binding site is contributed by Asp-355. His-414 contacts Zn(2+).

The protein belongs to the histidinol dehydrogenase family. The cofactor is Zn(2+).

The catalysed reaction is L-histidinol + 2 NAD(+) + H2O = L-histidine + 2 NADH + 3 H(+). It functions in the pathway amino-acid biosynthesis; L-histidine biosynthesis; L-histidine from 5-phospho-alpha-D-ribose 1-diphosphate: step 9/9. Functionally, catalyzes the sequential NAD-dependent oxidations of L-histidinol to L-histidinaldehyde and then to L-histidine. The sequence is that of Histidinol dehydrogenase from Carboxydothermus hydrogenoformans (strain ATCC BAA-161 / DSM 6008 / Z-2901).